Here is a 373-residue protein sequence, read N- to C-terminus: Queuine tRNA-ribosyltransferase (373 aa).

D93 acts as the Proton acceptor in catalysis. Substrate contacts are provided by residues 93–97, D147, Q191, and G218; that span reads DSGGF. Residues 249–255 are RNA binding; sequence GVGAPRD. The active-site Nucleophile is D268. The tract at residues 273 to 277 is RNA binding; important for wobble base 34 recognition; the sequence is TRNAR. Zn(2+)-binding residues include C306, C308, C311, and H337.

It belongs to the queuine tRNA-ribosyltransferase family. In terms of assembly, homodimer. Within each dimer, one monomer is responsible for RNA recognition and catalysis, while the other monomer binds to the replacement base PreQ1. Zn(2+) serves as cofactor.

The catalysed reaction is 7-aminomethyl-7-carbaguanine + guanosine(34) in tRNA = 7-aminomethyl-7-carbaguanosine(34) in tRNA + guanine. The protein operates within tRNA modification; tRNA-queuosine biosynthesis. Its function is as follows. Catalyzes the base-exchange of a guanine (G) residue with the queuine precursor 7-aminomethyl-7-deazaguanine (PreQ1) at position 34 (anticodon wobble position) in tRNAs with GU(N) anticodons (tRNA-Asp, -Asn, -His and -Tyr). Catalysis occurs through a double-displacement mechanism. The nucleophile active site attacks the C1' of nucleotide 34 to detach the guanine base from the RNA, forming a covalent enzyme-RNA intermediate. The proton acceptor active site deprotonates the incoming PreQ1, allowing a nucleophilic attack on the C1' of the ribose to form the product. After dissociation, two additional enzymatic reactions on the tRNA convert PreQ1 to queuine (Q), resulting in the hypermodified nucleoside queuosine (7-(((4,5-cis-dihydroxy-2-cyclopenten-1-yl)amino)methyl)-7-deazaguanosine). The sequence is that of Queuine tRNA-ribosyltransferase from Solidesulfovibrio magneticus (strain ATCC 700980 / DSM 13731 / RS-1) (Desulfovibrio magneticus).